Here is a 468-residue protein sequence, read N- to C-terminus: Aldehyde dehydrogenase family 3 member B1 (468 aa).

At M1 the chain carries N-acetylmethionine. Residue 188-193 (GNPQVG) coordinates NAD(+). Residues E210 and C244 contribute to the active site. The S-palmitoyl cysteine moiety is linked to residue C463. C465 carries the post-translational modification Cysteine methyl ester. A lipid anchor (S-geranylgeranyl cysteine) is attached at C465. A propeptide spans 466–468 (TLL) (removed in mature form).

This sequence belongs to the aldehyde dehydrogenase family. Dually lipidated in the C-terminus; prenylation occurs prior to, and is a prerequisite for palmitoylation. It is also required for activity towards long-chain substrates.

Its subcellular location is the cell membrane. The catalysed reaction is an aldehyde + NAD(+) + H2O = a carboxylate + NADH + 2 H(+). It carries out the reaction a long-chain fatty aldehyde + NAD(+) + H2O = a long-chain fatty acid + NADH + 2 H(+). The enzyme catalyses a medium-chain fatty aldehyde + NAD(+) + H2O = a medium-chain fatty acid + NADH + 2 H(+). It catalyses the reaction octanal + NAD(+) + H2O = octanoate + NADH + 2 H(+). The catalysed reaction is nonanal + NAD(+) + H2O = nonanoate + NADH + 2 H(+). It carries out the reaction hexadecanoate + NADH + 2 H(+) = hexadecanal + NAD(+) + H2O. The enzyme catalyses (2E)-octenal + NAD(+) + H2O = (2E)-octenoate + NADH + 2 H(+). It catalyses the reaction (E)-non-2-enal + NAD(+) + H2O = (E)-non-2-enoate + NADH + 2 H(+). The catalysed reaction is (E)-4-hydroxynon-2-enal + NAD(+) + H2O = (E)-4-hydroxynon-2-enoate + NADH + 2 H(+). It carries out the reaction (2E)-hexadecenal + NAD(+) + H2O = (E)-hexadec-2-enoate + NADH + 2 H(+). The enzyme catalyses benzaldehyde + NAD(+) + H2O = benzoate + NADH + 2 H(+). It catalyses the reaction an aldehyde + NADP(+) + H2O = a carboxylate + NADPH + 2 H(+). The catalysed reaction is a medium-chain fatty aldehyde + NADP(+) + H2O = a medium-chain fatty acid + NADPH + 2 H(+). It carries out the reaction hexanal + NADP(+) + H2O = hexanoate + NADPH + 2 H(+). The enzyme catalyses octanal + NADP(+) + H2O = octanoate + NADPH + 2 H(+). It catalyses the reaction nonanal + NADP(+) + H2O = nonanoate + NADPH + 2 H(+). The catalysed reaction is (2E)-octenal + NADP(+) + H2O = (2E)-octenoate + NADPH + 2 H(+). It carries out the reaction (E)-non-2-enal + NADP(+) + H2O = (E)-non-2-enoate + NADPH + 2 H(+). The enzyme catalyses (E)-4-hydroxynon-2-enal + NADP(+) + H2O = (E)-4-hydroxynon-2-enoate + NADPH + 2 H(+). It catalyses the reaction benzaldehyde + NADP(+) + H2O = benzoate + NADPH + 2 H(+). Its pathway is alcohol metabolism; ethanol degradation; acetate from ethanol: step 2/2. Its function is as follows. Oxidizes medium and long chain saturated and unsaturated fatty aldehydes generated in the plasma membrane into non-toxic fatty acids. May have a protective role against the cytotoxicity induced by lipid peroxidation. Short-chain fatty aldehydes are not good substrates. Can use both NADP(+) and NAD(+) as electron acceptor in vitro, however in vivo preference will depend on their tissue levels. Low activity towards acetaldehyde and 3,4-dihydroxyphenylacetaldehyde. Able to metabolize aromatic aldehydes such as benzaldehyde to their acid form. The polypeptide is Aldehyde dehydrogenase family 3 member B1 (ALDH3B1) (Bos taurus (Bovine)).